A 69-amino-acid polypeptide reads, in one-letter code: uncharacterized protein (69 aa).

Helical transmembrane passes span 7–29 and 44–66; these read LLSG…LGSI and ALQV…LGLL.

It localises to the cell membrane. This is an uncharacterized protein from Archaeoglobus fulgidus (strain ATCC 49558 / DSM 4304 / JCM 9628 / NBRC 100126 / VC-16).